The sequence spans 490 residues: MARFELQKLYIDGGYVDASNPETFDAINPANGEVLAQIQRAGKDDVERAVVAAEKGQKIWAAMTAVERSRILRRAVDILRERNDELAALETLDTGKAISETRYVDIVTGADVLEYYAGLVPAIEGEQIPLRDSSFVYTRREPLGVVAGIGAWNYPIQIALWKSAPALAAGNAMIFKPSEVTSLTTLKLAEIYTEAGVPNGVFNVLTGSGREVGTWITEHPRIEKVSFTGGTDTGKKVMASASSSSLKEVTMELGGKSPLIVFDDADLDRAADIAMMANFYSSGQVCTNGTRVFVPNALKAEFEAKILERVKRIRAGNPEDENINFGPLVSFEHMESVLGYIAKGKEQGARLLCGGDRLTGGVFDKGAFVAPTVFTDCTDEMTIVREEIFGPVMSILGYDTEDEVVRRANDTDFGLAAGIVTRDLNRAHRVIHLLEAGICWINAWGESAAQMPVGGYKQSGVGRENGISSLAQYTRIKSVQIELGDYASVF.

Residues Ile-27 and Asp-93 each contribute to the K(+) site. 150–152 (GAW) contacts NAD(+). The active-site Charge relay system is Lys-162. 176–179 (KPSE) serves as a coordination point for NAD(+). K(+) is bound at residue Val-180. 230–233 (GTDT) serves as a coordination point for NAD(+). Position 246 (Leu-246) interacts with K(+). Catalysis depends on Glu-252, which acts as the Proton acceptor. Residues Gly-254, Cys-286, and Glu-387 each contribute to the NAD(+) site. Cys-286 acts as the Nucleophile in catalysis. The residue at position 286 (Cys-286) is a Cysteine sulfenic acid (-SOH). 2 residues coordinate K(+): Lys-457 and Gly-460. Glu-464 functions as the Charge relay system in the catalytic mechanism.

It belongs to the aldehyde dehydrogenase family. Dimer of dimers. K(+) serves as cofactor.

The catalysed reaction is betaine aldehyde + NAD(+) + H2O = glycine betaine + NADH + 2 H(+). It functions in the pathway amine and polyamine biosynthesis; betaine biosynthesis via choline pathway; betaine from betaine aldehyde: step 1/1. In terms of biological role, involved in the biosynthesis of the osmoprotectant glycine betaine. Catalyzes the irreversible oxidation of betaine aldehyde to the corresponding acid. This chain is Betaine aldehyde dehydrogenase, found in Pseudomonas syringae pv. syringae (strain B728a).